The chain runs to 361 residues: Chorismate synthase (361 aa).

The NADP(+) site is built by arginine 48 and arginine 54. Residues 131–133 (RSS), 243–244 (NA), glycine 287, 302–306 (KPTSS), and arginine 328 each bind FMN.

The protein belongs to the chorismate synthase family. Homotetramer. FMNH2 serves as cofactor.

The catalysed reaction is 5-O-(1-carboxyvinyl)-3-phosphoshikimate = chorismate + phosphate. It functions in the pathway metabolic intermediate biosynthesis; chorismate biosynthesis; chorismate from D-erythrose 4-phosphate and phosphoenolpyruvate: step 7/7. In terms of biological role, catalyzes the anti-1,4-elimination of the C-3 phosphate and the C-6 proR hydrogen from 5-enolpyruvylshikimate-3-phosphate (EPSP) to yield chorismate, which is the branch point compound that serves as the starting substrate for the three terminal pathways of aromatic amino acid biosynthesis. This reaction introduces a second double bond into the aromatic ring system. The protein is Chorismate synthase of Rhodopseudomonas palustris (strain BisB5).